A 531-amino-acid chain; its full sequence is Bifunctional aspartate aminotransferase and L-aspartate beta-decarboxylase (531 aa).

The L-aspartate site is built by G114 and N255. K314 bears the N6-(pyridoxal phosphate)lysine mark. L-aspartate is bound at residue R496.

The protein belongs to the class-I pyridoxal-phosphate-dependent aminotransferase family. In terms of assembly, homododecamer. Pyridoxal 5'-phosphate is required as a cofactor.

It catalyses the reaction L-aspartate + H(+) = L-alanine + CO2. The enzyme catalyses L-aspartate + 2-oxoglutarate = oxaloacetate + L-glutamate. Inhibited by 10 mM Co(2+), Mn(2+) and Ni(2+), and by 1 mM Cu(2+) and Hg(2+). In terms of biological role, bifunctional enzyme that has both L-aspartate decarboxylase and transaminase activity. Has high activity with L-aspartate, and much lower activity with D-aspartate, L-lysine and L-glutamine. This is Bifunctional aspartate aminotransferase and L-aspartate beta-decarboxylase from Pseudomonas sp.